Reading from the N-terminus, the 361-residue chain is Peroxidase A (361 aa).

This sequence belongs to the peroxidase family. Post-translationally, partially N-glycosylated.

Its subcellular location is the secreted. It carries out the reaction 2 a phenolic donor + H2O2 = 2 a phenolic radical donor + 2 H2O. The chain is Peroxidase A from Aloe vera (Aloe).